Reading from the N-terminus, the 101-residue chain is Protein Tat (101 aa).

An interaction with human CREBBP region spans residues 1–24 (MEPVDPRLEPWKHPGSQPKTACTN). The transactivation stretch occupies residues 1 to 48 (MEPVDPRLEPWKHPGSQPKTACTNCYCKKCCFHCQVCFITKGLGISYG). Positions 22, 25, and 27 each coordinate Zn(2+). The interval 22-37 (CTNCYCKKCCFHCQVC) is cysteine-rich. Position 28 is an N6-acetyllysine; by host PCAF (Lys28). Positions 30, 33, 34, and 37 each coordinate Zn(2+). The interval 38–48 (FITKGLGISYG) is core. A compositionally biased stretch (basic residues) spans 48-57 (GRKKRRQRRR). Residues 48–101 (GRKKRRQRRRAPPDSEVHQVSLPKQPASQPQGDPTGPKESKKKVERETETDPVH) are disordered. A Nuclear localization signal, RNA-binding (TAR), and protein transduction motif is present at residues 49-57 (RKKRRQRRR). Residues 49–86 (RKKRRQRRRAPPDSEVHQVSLPKQPASQPQGDPTGPKE) form an interaction with the host capping enzyme RNGTT region. N6-acetyllysine; by host EP300 and GCN5L2 occurs at positions 50 and 51. Asymmetric dimethylarginine; by host PRMT6 occurs at positions 52 and 53. Lys71 participates in a covalent cross-link: Glycyl lysine isopeptide (Lys-Gly) (interchain with G-Cter in ubiquitin). A compositionally biased stretch (basic and acidic residues) spans 83 to 101 (GPKESKKKVERETETDPVH).

It belongs to the lentiviruses Tat family. In terms of assembly, interacts with host CCNT1. Associates with the P-TEFb complex composed at least of Tat, P-TEFb (CDK9 and CCNT1), TAR RNA, RNA Pol II. Recruits the HATs CREBBP, TAF1/TFIID, EP300, PCAF and GCN5L2. Interacts with host KAT5/Tip60; this interaction targets the latter to degradation. Interacts with the host deacetylase SIRT1. Interacts with host capping enzyme RNGTT; this interaction stimulates RNGTT. Binds to host KDR, and to the host integrins ITGAV/ITGB3 and ITGA5/ITGB1. Interacts with host KPNB1/importin beta-1 without previous binding to KPNA1/importin alpha-1. Interacts with EIF2AK2. Interacts with host nucleosome assembly protein NAP1L1; this interaction may be required for the transport of Tat within the nucleus, since the two proteins interact at the nuclear rim. Interacts with host C1QBP/SF2P32; this interaction involves lysine-acetylated Tat. Interacts with the host chemokine receptors CCR2, CCR3 and CXCR4. Interacts with host DPP4/CD26; this interaction may trigger an anti-proliferative effect. Interacts with host LDLR. Interacts with the host extracellular matrix metalloproteinase MMP1. Interacts with host PRMT6; this interaction mediates Tat's methylation. Interacts with, and is ubiquitinated by MDM2/Hdm2. Interacts with host PSMC3 and HTATIP2. Interacts with STAB1; this interaction may overcome SATB1-mediated repression of IL2 and IL2RA (interleukin) in T cells by binding to the same domain than HDAC1. Interacts (when acetylated) with human CDK13, thereby increasing HIV-1 mRNA splicing and promoting the production of the doubly spliced HIV-1 protein Nef. Interacts with host TBP; this interaction modulates the activity of transcriptional pre-initiation complex. Interacts with host RELA. Interacts with host PLSCR1; this interaction negatively regulates Tat transactivation activity by altering its subcellular distribution. In terms of processing, asymmetrical arginine methylation by host PRMT6 seems to diminish the transactivation capacity of Tat and affects the interaction with host CCNT1. Acetylation by EP300, CREBBP, GCN5L2/GCN5 and PCAF regulates the transactivation activity of Tat. EP300-mediated acetylation of Lys-50 promotes dissociation of Tat from the TAR RNA through the competitive binding to PCAF's bromodomain. In addition, the non-acetylated Tat's N-terminus can also interact with PCAF. PCAF-mediated acetylation of Lys-28 enhances Tat's binding to CCNT1. Lys-50 is deacetylated by SIRT1. Post-translationally, polyubiquitination by host MDM2 does not target Tat to degradation, but activates its transactivation function and fosters interaction with CCNT1 and TAR RNA. In terms of processing, phosphorylated by EIF2AK2 on serine and threonine residues adjacent to the basic region important for TAR RNA binding and function. Phosphorylation of Tat by EIF2AK2 is dependent on the prior activation of EIF2AK2 by dsRNA.

The protein resides in the host nucleus. The protein localises to the host nucleolus. Its subcellular location is the host cytoplasm. It localises to the secreted. Its function is as follows. Transcriptional activator that increases RNA Pol II processivity, thereby increasing the level of full-length viral transcripts. Recognizes a hairpin structure at the 5'-LTR of the nascent viral mRNAs referred to as the transactivation responsive RNA element (TAR) and recruits the cyclin T1-CDK9 complex (P-TEFb complex) that will in turn hyperphosphorylate the RNA polymerase II to allow efficient elongation. The CDK9 component of P-TEFb and other Tat-activated kinases hyperphosphorylate the C-terminus of RNA Pol II that becomes stabilized and much more processive. Other factors such as HTATSF1/Tat-SF1, SUPT5H/SPT5, and HTATIP2 are also important for Tat's function. Besides its effect on RNA Pol II processivity, Tat induces chromatin remodeling of proviral genes by recruiting the histone acetyltransferases (HATs) CREBBP, EP300 and PCAF to the chromatin. This also contributes to the increase in proviral transcription rate, especially when the provirus integrates in transcriptionally silent region of the host genome. To ensure maximal activation of the LTR, Tat mediates nuclear translocation of NF-kappa-B by interacting with host RELA. Through its interaction with host TBP, Tat may also modulate transcription initiation. Tat can reactivate a latently infected cell by penetrating in it and transactivating its LTR promoter. In the cytoplasm, Tat is thought to act as a translational activator of HIV-1 mRNAs. Functionally, extracellular circulating Tat can be endocytosed by surrounding uninfected cells via the binding to several surface receptors such as CD26, CXCR4, heparan sulfate proteoglycans (HSPG) or LDLR. Neurons are rarely infected, but they internalize Tat via their LDLR. Through its interaction with nuclear HATs, Tat is potentially able to control the acetylation-dependent cellular gene expression. Modulates the expression of many cellular genes involved in cell survival, proliferation or in coding for cytokines or cytokine receptors. Tat plays a role in T-cell and neurons apoptosis. Tat induced neurotoxicity and apoptosis probably contribute to neuroAIDS. Circulating Tat also acts as a chemokine-like and/or growth factor-like molecule that binds to specific receptors on the surface of the cells, affecting many cellular pathways. In the vascular system, Tat binds to ITGAV/ITGB3 and ITGA5/ITGB1 integrins dimers at the surface of endothelial cells and competes with bFGF for heparin-binding sites, leading to an excess of soluble bFGF. The chain is Protein Tat from Human immunodeficiency virus type 1 group M subtype B (isolate SF162) (HIV-1).